A 380-amino-acid polypeptide reads, in one-letter code: Cytochrome b (380 aa).

4 consecutive transmembrane segments (helical) span residues 33 to 53 (FGSL…FLAM), 77 to 98 (WLIR…YMHI), 113 to 133 (WNIG…GYVL), and 178 to 198 (FFAF…LHLL). Heme b-binding residues include His83 and His97. 2 residues coordinate heme b: His182 and His196. His201 provides a ligand contact to a ubiquinone. 4 consecutive transmembrane segments (helical) span residues 226-246 (YKDL…ALFA), 288-308 (LGGV…PFLH), 320-340 (LTQM…WIGG), and 347-367 (FIII…VLFP).

The protein belongs to the cytochrome b family. As to quaternary structure, the cytochrome bc1 complex contains 3 respiratory subunits (MT-CYB, CYC1 and UQCRFS1), 2 core proteins (UQCRC1 and UQCRC2) and probably 6 low-molecular weight proteins. It depends on heme b as a cofactor.

The protein localises to the mitochondrion inner membrane. Functionally, component of the ubiquinol-cytochrome c reductase complex (complex III or cytochrome b-c1 complex) that is part of the mitochondrial respiratory chain. The b-c1 complex mediates electron transfer from ubiquinol to cytochrome c. Contributes to the generation of a proton gradient across the mitochondrial membrane that is then used for ATP synthesis. The polypeptide is Cytochrome b (mt-cyb) (Gadus morhua (Atlantic cod)).